A 994-amino-acid chain; its full sequence is Phosphoenolpyruvate carboxylase (994 aa).

The tract at residues 1-66 (MKSSGSARAT…QGRTREDKDR (66 aa)) is disordered. Composition is skewed to low complexity over residues 14-25 (AVSSSSAPAHAE) and 41-54 (AAAR…AASA). Catalysis depends on residues H204 and K646.

The protein belongs to the PEPCase type 1 family. The cofactor is Mg(2+).

It carries out the reaction oxaloacetate + phosphate = phosphoenolpyruvate + hydrogencarbonate. Functionally, forms oxaloacetate, a four-carbon dicarboxylic acid source for the tricarboxylic acid cycle. The sequence is that of Phosphoenolpyruvate carboxylase from Burkholderia pseudomallei (strain 668).